The primary structure comprises 529 residues: Bifunctional purine biosynthesis protein PurH (529 aa).

One can recognise an MGS-like domain in the interval 1-148 (MQQRRPVRRA…KNHKDVAIVV (148 aa)).

This sequence belongs to the PurH family.

It catalyses the reaction (6R)-10-formyltetrahydrofolate + 5-amino-1-(5-phospho-beta-D-ribosyl)imidazole-4-carboxamide = 5-formamido-1-(5-phospho-D-ribosyl)imidazole-4-carboxamide + (6S)-5,6,7,8-tetrahydrofolate. It carries out the reaction IMP + H2O = 5-formamido-1-(5-phospho-D-ribosyl)imidazole-4-carboxamide. Its pathway is purine metabolism; IMP biosynthesis via de novo pathway; 5-formamido-1-(5-phospho-D-ribosyl)imidazole-4-carboxamide from 5-amino-1-(5-phospho-D-ribosyl)imidazole-4-carboxamide (10-formyl THF route): step 1/1. It participates in purine metabolism; IMP biosynthesis via de novo pathway; IMP from 5-formamido-1-(5-phospho-D-ribosyl)imidazole-4-carboxamide: step 1/1. The protein is Bifunctional purine biosynthesis protein PurH of Salmonella enteritidis PT4 (strain P125109).